Here is a 943-residue protein sequence, read N- to C-terminus: Leucine--tRNA ligase (943 aa).

Positions 40–51 (PYPSGAGLHVGH) match the 'HIGH' region motif. The short motif at 717 to 721 (KMSKS) is the 'KMSKS' region element. Residue lysine 720 participates in ATP binding.

This sequence belongs to the class-I aminoacyl-tRNA synthetase family.

Its subcellular location is the cytoplasm. It carries out the reaction tRNA(Leu) + L-leucine + ATP = L-leucyl-tRNA(Leu) + AMP + diphosphate. The chain is Leucine--tRNA ligase from Bacteroides fragilis (strain ATCC 25285 / DSM 2151 / CCUG 4856 / JCM 11019 / LMG 10263 / NCTC 9343 / Onslow / VPI 2553 / EN-2).